A 113-amino-acid chain; its full sequence is UPF0122 protein MGAS10270_Spy1030 (113 aa).

This sequence belongs to the UPF0122 family.

Functionally, might take part in the signal recognition particle (SRP) pathway. This is inferred from the conservation of its genetic proximity to ftsY/ffh. May be a regulatory protein. The protein is UPF0122 protein MGAS10270_Spy1030 of Streptococcus pyogenes serotype M2 (strain MGAS10270).